A 1037-amino-acid polypeptide reads, in one-letter code: Probable serine/threonine-protein kinase KCC4 (1037 aa).

The Protein kinase domain occupies 21–285 (WKLGETLGFG…IRDILSHPLL (265 aa)). Residues 27–35 (LGFGSTGKV) and lysine 50 each bind ATP. The Proton acceptor role is filled by aspartate 152. A compositionally biased stretch (basic residues) spans 372-387 (NKKNRNKIKKTKKNKR). The segment at 372–494 (NKKNRNKIKK…MPNTKRSSLT (123 aa)) is disordered. The segment covering 388–404 (SSTLSSSSSLLLNNRSI) has biased composition (low complexity). Serine 396 is subject to Phosphoserine. Residues 408–427 (PRRRTSKRHSREFSSSRKRS) are compositionally biased toward basic residues. Positions 453-465 (NVASANTQATPSG) are enriched in polar residues. Residues 469-480 (PHKRNSKKRSSK) show a composition bias toward basic residues. The span at 481 to 494 (RLSYMPNTKRSSLT) shows a compositional bias: low complexity. Serine 675, serine 707, serine 777, serine 822, serine 825, and serine 871 each carry phosphoserine. 3 disordered regions span residues 746–804 (LIKE…DFPQ), 810–829 (QEYDMKDKNPNQSPISKSAE), and 861–918 (TLPS…TVKK). Residues 861-873 (TLPSLTSNNSSVG) show a composition bias toward polar residues. Positions 879–888 (GAEKGTESEK) are enriched in basic and acidic residues.

This sequence belongs to the protein kinase superfamily. CAMK Ser/Thr protein kinase family. NIM1 subfamily. In terms of assembly, interacts with septin proteins, primarily with CDC11. Interacts with SWE1 and NAP1.

The protein localises to the bud neck. The enzyme catalyses L-seryl-[protein] + ATP = O-phospho-L-seryl-[protein] + ADP + H(+). It carries out the reaction L-threonyl-[protein] + ATP = O-phospho-L-threonyl-[protein] + ADP + H(+). Involved in regulation of bud growth during cell cycle and in septin organization. Plays a role in cell wall synthesis. The protein is Probable serine/threonine-protein kinase KCC4 (KCC4) of Saccharomyces cerevisiae (strain ATCC 204508 / S288c) (Baker's yeast).